A 401-amino-acid polypeptide reads, in one-letter code: L-methionine gamma-lyase (401 aa).

Pyridoxal 5'-phosphate is bound by residues 59-61 (YTR) and 89-90 (GI). A substrate-binding site is contributed by Tyr-114. A pyridoxal 5'-phosphate-binding site is contributed by 210-212 (SAT). The residue at position 213 (Lys-213) is an N6-(pyridoxal phosphate)lysine. A substrate-binding site is contributed by Arg-377.

The protein belongs to the trans-sulfuration enzymes family. L-methionine gamma-lyase subfamily. In terms of assembly, homotetramer; dimer of active dimers. The cofactor is pyridoxal 5'-phosphate.

It carries out the reaction L-methionine + H2O = methanethiol + 2-oxobutanoate + NH4(+). The enzyme catalyses L-homocysteine + H2O = 2-oxobutanoate + hydrogen sulfide + NH4(+) + H(+). Catalyzes the alpha,gamma-elimination of L-methionine to produce methanethiol, 2-oxobutanoate and ammonia; methanethiol (methyl mercaptan) is considered to be one of the main causes of the oral malodor associated with periodontitis and may also play a role in the pathogenicity of T.denticola. Also displays homocysteine desulfhydrase activity, degrading homocysteine to produce hydrogen sulfide, 2-oxobutanoate and ammonia. This Treponema denticola (strain ATCC 35405 / DSM 14222 / CIP 103919 / JCM 8153 / KCTC 15104) protein is L-methionine gamma-lyase.